We begin with the raw amino-acid sequence, 269 residues long: Zinc transporter ZupT (269 aa).

Transmembrane regions (helical) follow at residues 11 to 31 (IALAVTLAAGLATAIGSLLVL), 40 to 60 (LLAFGLAFAGGAMVYVSLSEI), 80 to 100 (YGTLAFLLGVIVIVLIDHFIP), 125 to 145 (ALLTSIAITAHNFPEGLATFF), 158 to 178 (AFAIAIHNIPEGIAIAVPVYF), 187 to 207 (FSASLLSGLAEPVGAALGYWL), 217 to 237 (FGWVFGLIAGVMVFLALDELL), and 249 to 269 (TVYGLVAGMGTLAISLVLFKW). Residues Asn-136 and Glu-139 each coordinate Fe(2+). Zn(2+) contacts are provided by Glu-139 and His-164. Asn-165, Glu-168, and Glu-197 together coordinate Fe(2+). Residue Glu-168 participates in Zn(2+) binding.

Belongs to the ZIP transporter (TC 2.A.5) family. ZupT subfamily.

The protein resides in the cell inner membrane. It catalyses the reaction Zn(2+)(in) = Zn(2+)(out). Mediates zinc uptake. May also transport other divalent cations. This Stenotrophomonas maltophilia (strain R551-3) protein is Zinc transporter ZupT.